The following is a 361-amino-acid chain: Terpene synthase 6 (361 aa).

Positions Asp-81–Ala-86 match the DDxx(x)D/E motif motif. Residues Asn-223 to Glu-231 carry the NDxxSxxxD/E motif motif.

It belongs to the terpene synthase family.

It catalyses the reaction (2E,6E)-farnesyl diphosphate = (2S,3R,6S,9S)-(-)-protoillud-7-ene + diphosphate. Its function is as follows. Terpene synthase that converts its substrate farnesyl diphosphate (FPP) into the sesquiterpene (2S,3R,6S,9S)-(-)-protoillud-7-ene. In Dictyostelium discoideum (Social amoeba), this protein is Terpene synthase 6.